A 223-amino-acid polypeptide reads, in one-letter code: Phosphoribosylformylglycinamidine synthase subunit PurQ (223 aa).

In terms of domain architecture, Glutamine amidotransferase type-1 spans 4 to 223; that stretch reads KIGVITFPGT…FLSAVGTIAA (220 aa). The Nucleophile role is filled by Cys-87. Catalysis depends on residues His-195 and Glu-197.

As to quaternary structure, part of the FGAM synthase complex composed of 1 PurL, 1 PurQ and 2 PurS subunits.

The protein localises to the cytoplasm. The enzyme catalyses N(2)-formyl-N(1)-(5-phospho-beta-D-ribosyl)glycinamide + L-glutamine + ATP + H2O = 2-formamido-N(1)-(5-O-phospho-beta-D-ribosyl)acetamidine + L-glutamate + ADP + phosphate + H(+). The catalysed reaction is L-glutamine + H2O = L-glutamate + NH4(+). Its pathway is purine metabolism; IMP biosynthesis via de novo pathway; 5-amino-1-(5-phospho-D-ribosyl)imidazole from N(2)-formyl-N(1)-(5-phospho-D-ribosyl)glycinamide: step 1/2. In terms of biological role, part of the phosphoribosylformylglycinamidine synthase complex involved in the purines biosynthetic pathway. Catalyzes the ATP-dependent conversion of formylglycinamide ribonucleotide (FGAR) and glutamine to yield formylglycinamidine ribonucleotide (FGAM) and glutamate. The FGAM synthase complex is composed of three subunits. PurQ produces an ammonia molecule by converting glutamine to glutamate. PurL transfers the ammonia molecule to FGAR to form FGAM in an ATP-dependent manner. PurS interacts with PurQ and PurL and is thought to assist in the transfer of the ammonia molecule from PurQ to PurL. This chain is Phosphoribosylformylglycinamidine synthase subunit PurQ, found in Corynebacterium glutamicum (strain ATCC 13032 / DSM 20300 / JCM 1318 / BCRC 11384 / CCUG 27702 / LMG 3730 / NBRC 12168 / NCIMB 10025 / NRRL B-2784 / 534).